The sequence spans 952 residues: MFKFFSGFGDSNEKEIRALEPLVDKINQLESSFSALSDEALKAKTAEFKERLKETFETTASAILKDIAGTTAELEEAQKTADNSKQSRLKAKLESLNKDLSVKENAALNAILPEAFAAVREASRRTIGLRHYDVQLIGGMVLHHGKIAEMRTGEGKTLVATLPLYLNSLLGKGVHLVTVNDYLARRDAYWMGPVYHALGVSVSSIYPMQTPTEELPSRLFDPTYTSETPNDPWMHFRPISRQEAYKADITYGTSTEFGFDYLRDNLRPDLAQCVQREMNYAIVDEIDNLLIDEARTPLIISAPDTEAGKLYEVFARLAPRLAAGKDYEINEKDRNAELTEDGWANVEKLLSREGVMKGSSLYDPQNAPLIRHLRNALSAKEFYKKDHQYVVKENEVIIIDEFTGRMMLGRRYSEGLHQAIEAKEHVKIQQESKTYATVTIQNLFRMYRKLCGMTGTAATEAEEFSKIYKLEVVIIPTNKPAIREDYGDQIYKDQSAKFKAVVNEINEMRNLGRPVLVGTVSIENSEMLSNMLKRQGIEHKVLNAKQHEKEAQVVAEAGKPGAVTVATNMAGRGVDILLGGKEPPKDDDKAYSQWQVHHQQVLEAGGLHVIGTERHESRRIDNQLRGRSGRQGDPGSSRFYVALDDDIMRRFGSERIQGIMEWAGMDENTPIENGLVSRTLENAQKRVEGYHFDVRKHLVEYDDVVNKHREVIYAERRKILLGADLKSNILDMIREEIMTQTAEHTQGYDSSEWNLEGLVTHIGGIFALPAEINAEALAKLSQEEITELLTRTAEELYQKKEAEIGAGSMRLLERIIMLHTLDSLWVEHLTIMENLRREIGLQAFAQRDPLIAYKNEGHVRFQELLETIKHDVVHNIYRVNIQIQHQTESATAKAASRPVQQQKPLPAAPAAAIPGVSAKAATQPAAPAAKEVGRNDPCPCGSGKKYKKCCGK.

ATP is bound by residues glutamine 135, 153-157, and aspartate 575; that span reads GEGKT. The segment covering 916 to 930 has biased composition (low complexity); sequence VSAKAATQPAAPAAK. The interval 916-952 is disordered; the sequence is VSAKAATQPAAPAAKEVGRNDPCPCGSGKKYKKCCGK. The Zn(2+) site is built by cysteine 938, cysteine 940, cysteine 949, and cysteine 950.

The protein belongs to the SecA family. In terms of assembly, monomer and homodimer. Part of the essential Sec protein translocation apparatus which comprises SecA, SecYEG and auxiliary proteins SecDF. Other proteins may also be involved. Zn(2+) serves as cofactor.

Its subcellular location is the cell membrane. The protein localises to the cytoplasm. It catalyses the reaction ATP + H2O + cellular proteinSide 1 = ADP + phosphate + cellular proteinSide 2.. Its function is as follows. Part of the Sec protein translocase complex. Interacts with the SecYEG preprotein conducting channel. Has a central role in coupling the hydrolysis of ATP to the transfer of proteins into and across the cell membrane, serving as an ATP-driven molecular motor driving the stepwise translocation of polypeptide chains across the membrane. This chain is Protein translocase subunit SecA, found in Dehalococcoides mccartyi (strain ATCC BAA-2266 / KCTC 15142 / 195) (Dehalococcoides ethenogenes (strain 195)).